A 350-amino-acid polypeptide reads, in one-letter code: Hydroxymethylglutaryl-CoA synthase (350 aa).

Glu83 serves as the catalytic Proton donor/acceptor. Cys115 (acyl-thioester intermediate) is an active-site residue. Positions 115 and 156 each coordinate (3S)-3-hydroxy-3-methylglutaryl-CoA. Residue Arg204 coordinates CoA. Positions 206 and 239 each coordinate (3S)-3-hydroxy-3-methylglutaryl-CoA. The active-site Proton donor/acceptor is His239. Lys244 is a CoA binding site. (3S)-3-hydroxy-3-methylglutaryl-CoA contacts are provided by Asn271 and Ser301.

This sequence belongs to the thiolase-like superfamily. Archaeal HMG-CoA synthase family. In terms of assembly, interacts with acetoacetyl-CoA thiolase that catalyzes the precedent step in the pathway and with a DUF35 protein. The acetoacetyl-CoA thiolase/HMG-CoA synthase complex channels the intermediate via a fused CoA-binding site, which allows for efficient coupling of the endergonic thiolase reaction with the exergonic HMGCS reaction.

The catalysed reaction is acetoacetyl-CoA + acetyl-CoA + H2O = (3S)-3-hydroxy-3-methylglutaryl-CoA + CoA + H(+). It participates in metabolic intermediate biosynthesis; (R)-mevalonate biosynthesis; (R)-mevalonate from acetyl-CoA: step 2/3. In terms of biological role, catalyzes the condensation of acetyl-CoA with acetoacetyl-CoA to form 3-hydroxy-3-methylglutaryl-CoA (HMG-CoA). Functions in the mevalonate (MVA) pathway leading to isopentenyl diphosphate (IPP), a key precursor for the biosynthesis of isoprenoid compounds that are building blocks of archaeal membrane lipids. The polypeptide is Hydroxymethylglutaryl-CoA synthase (Thermococcus kodakarensis (strain ATCC BAA-918 / JCM 12380 / KOD1) (Pyrococcus kodakaraensis (strain KOD1))).